The sequence spans 205 residues: Large ribosomal subunit protein uL4 (205 aa).

The segment at 43–77 (RRRSGTASTKGRSDVAGSRAKLFRQKGTGRARRGD) is disordered. Over residues 63-73 (KLFRQKGTGRA) the composition is skewed to basic residues.

Belongs to the universal ribosomal protein uL4 family. In terms of assembly, part of the 50S ribosomal subunit.

One of the primary rRNA binding proteins, this protein initially binds near the 5'-end of the 23S rRNA. It is important during the early stages of 50S assembly. It makes multiple contacts with different domains of the 23S rRNA in the assembled 50S subunit and ribosome. Functionally, forms part of the polypeptide exit tunnel. The protein is Large ribosomal subunit protein uL4 of Desulfosudis oleivorans (strain DSM 6200 / JCM 39069 / Hxd3) (Desulfococcus oleovorans).